Here is a 770-residue protein sequence, read N- to C-terminus: Probable methyltransferase PMT24 (770 aa).

Residues 1–17 (MAMGKYSRVDGKKSSGY) are Cytoplasmic-facing. The chain crosses the membrane as a helical; Signal-anchor for type II membrane protein span at residues 18–38 (GLTITIVLIVSLCLVGAWMFM). Residues 39–770 (SSWSAPTESI…EAETIQSAIA (732 aa)) are Lumenal-facing. Basic and acidic residues-rich tracts occupy residues 54 to 81 (ERTK…FPDE) and 93 to 164 (NEEK…KSED). A disordered region spans residues 54-223 (ERTKDVDTTK…STGSGAWSTQ (170 aa)). N160 and N166 each carry an N-linked (GlcNAc...) asparagine glycan. The segment covering 212 to 223 (ESSTGSGAWSTQ) has biased composition (polar residues). N-linked (GlcNAc...) asparagine glycans are attached at residues N244 and N363.

The protein belongs to the methyltransferase superfamily.

It localises to the golgi apparatus membrane. The polypeptide is Probable methyltransferase PMT24 (Arabidopsis thaliana (Mouse-ear cress)).